We begin with the raw amino-acid sequence, 344 residues long: tRNA dimethylallyltransferase (344 aa).

19 to 26 (GPTASGKT) contacts ATP. Residue 21–26 (TASGKT) coordinates substrate.

This sequence belongs to the IPP transferase family. Monomer. Requires Mg(2+) as cofactor.

The enzyme catalyses adenosine(37) in tRNA + dimethylallyl diphosphate = N(6)-dimethylallyladenosine(37) in tRNA + diphosphate. Its function is as follows. Catalyzes the transfer of a dimethylallyl group onto the adenine at position 37 in tRNAs that read codons beginning with uridine, leading to the formation of N6-(dimethylallyl)adenosine (i(6)A). In Bifidobacterium animalis subsp. lactis (strain AD011), this protein is tRNA dimethylallyltransferase.